The primary structure comprises 168 residues: Ribosome maturation factor RimM (168 aa).

In terms of domain architecture, PRC barrel spans 93–168 (EDEFYQSDLV…IVLNIPEFID (76 aa)).

This sequence belongs to the RimM family. Binds ribosomal protein uS19.

It localises to the cytoplasm. Its function is as follows. An accessory protein needed during the final step in the assembly of 30S ribosomal subunit, possibly for assembly of the head region. Essential for efficient processing of 16S rRNA. May be needed both before and after RbfA during the maturation of 16S rRNA. It has affinity for free ribosomal 30S subunits but not for 70S ribosomes. The polypeptide is Ribosome maturation factor RimM (Wolbachia pipientis wMel).